A 700-amino-acid polypeptide reads, in one-letter code: UvrABC system protein B (700 aa).

The region spanning 26-183 is the Helicase ATP-binding domain; the sequence is SGLHRGDRIQ…RALVGIQYLR (158 aa). Position 39–46 (39–46) interacts with ATP; sequence GVTGSGKT. Residues 92-115 carry the Beta-hairpin motif; that stretch reads YYDYYQPEAYVPSSDTYIEKDASI. The Helicase C-terminal domain maps to 430-596; that stretch reads QVDDLLHEIR…GVTKSVDEVR (167 aa). Residues 608–627 form a disordered region; the sequence is REGEAPAPRRLASESAPRSR. The UVR domain occupies 631-666; the sequence is ETLVGELEIAMREAAVALDFEAAARLRDQLFEVRTA. Residues 667–700 form a disordered region; the sequence is LGQAPSEARGNAQAPKRPPGSAPQRRAGGGRRGR.

Belongs to the UvrB family. As to quaternary structure, forms a heterotetramer with UvrA during the search for lesions. Interacts with UvrC in an incision complex.

It localises to the cytoplasm. In terms of biological role, the UvrABC repair system catalyzes the recognition and processing of DNA lesions. A damage recognition complex composed of 2 UvrA and 2 UvrB subunits scans DNA for abnormalities. Upon binding of the UvrA(2)B(2) complex to a putative damaged site, the DNA wraps around one UvrB monomer. DNA wrap is dependent on ATP binding by UvrB and probably causes local melting of the DNA helix, facilitating insertion of UvrB beta-hairpin between the DNA strands. Then UvrB probes one DNA strand for the presence of a lesion. If a lesion is found the UvrA subunits dissociate and the UvrB-DNA preincision complex is formed. This complex is subsequently bound by UvrC and the second UvrB is released. If no lesion is found, the DNA wraps around the other UvrB subunit that will check the other stand for damage. The protein is UvrABC system protein B of Gemmatimonas aurantiaca (strain DSM 14586 / JCM 11422 / NBRC 100505 / T-27).